A 321-amino-acid chain; its full sequence is Ferrochelatase (321 aa).

Fe cation is bound by residues histidine 194 and glutamate 275.

This sequence belongs to the ferrochelatase family.

It is found in the cytoplasm. The catalysed reaction is heme b + 2 H(+) = protoporphyrin IX + Fe(2+). It functions in the pathway porphyrin-containing compound metabolism; protoheme biosynthesis; protoheme from protoporphyrin-IX: step 1/1. Functionally, catalyzes the ferrous insertion into protoporphyrin IX. The polypeptide is Ferrochelatase (Wigglesworthia glossinidia brevipalpis).